The chain runs to 187 residues: Protein TfaD (187 aa).

It in the C-terminal section; belongs to the tfa family.

This chain is Protein TfaD (tfaD), found in Escherichia coli (strain K12).